The following is an 827-amino-acid chain: WD repeat-containing protein 27 (827 aa).

WD repeat units lie at residues 3–57, 62–101, 112–151, 155–194, 201–237, 292–337, 344–387, 502–542, 546–584, 590–629, 646–687, 698–740, 746–784, and 788–826; these read NPQD…IWNT, HQLL…MWNL, LVPR…MLDI, AVRA…VWDH, YSSS…IFSL, FPVL…LANL, YYKD…VLEI, KPGP…VFDA, GTPA…MWSA, ALLL…RYHI, KLIC…VFDL, EAHS…LWDL, ERHF…VYEM, and TFSH…LFLA.

In Homo sapiens (Human), this protein is WD repeat-containing protein 27 (WDR27).